Reading from the N-terminus, the 299-residue chain is Putative S-adenosyl-L-methionine-dependent methyltransferase MAB_0027c (299 aa).

S-adenosyl-L-methionine is bound by residues aspartate 126 and 155 to 156 (DL).

This sequence belongs to the UPF0677 family.

Its function is as follows. Exhibits S-adenosyl-L-methionine-dependent methyltransferase activity. The protein is Putative S-adenosyl-L-methionine-dependent methyltransferase MAB_0027c of Mycobacteroides abscessus (strain ATCC 19977 / DSM 44196 / CCUG 20993 / CIP 104536 / JCM 13569 / NCTC 13031 / TMC 1543 / L948) (Mycobacterium abscessus).